We begin with the raw amino-acid sequence, 659 residues long: Polyamine transporter 4 (659 aa).

Composition is skewed to polar residues over residues 1–20 and 28–45; these read MPSS…NIQQ and NVTN…TGSI. The tract at residues 1 to 81 is disordered; that stretch reads MPSSLTKTES…LDWDGPDDPD (81 aa). At 1 to 99 the chain is on the cytoplasmic side; sequence MPSSLTKTES…KKWYTTMTSA (99 aa). The chain crosses the membrane as a helical span at residues 100–120; that stretch reads FLCLVVTMGSSLYVSSVPELV. The Extracellular segment spans residues 121 to 128; that stretch reads ERYHVSQT. The helical transmembrane segment at 129–149 threads the bilayer; it reads LALAGLTFYLLGLSTVIGAPL. Residues 150–157 are Cytoplasmic-facing; the sequence is SEVFGRKP. A helical membrane pass occupies residues 158 to 178; it reads VYLFSLPVSMLFTMGVGLSNG. Residues 179-187 are Extracellular-facing; that stretch reads HMRIILPLR. The helical transmembrane segment at 188–208 threads the bilayer; sequence FLSGVFASPALSVGSGTILDI. The Cytoplasmic segment spans residues 209–215; the sequence is FDVDQVS. The helical transmembrane segment at 216–236 threads the bilayer; it reads VAMTYFVLSPFLGPVLSPIMA. The Extracellular segment spans residues 237-246; that stretch reads GFATEAKGWR. A helical membrane pass occupies residues 247-267; it reads WSEWIQLIAGGLILPFIALMP. At 268–316 the chain is on the cytoplasmic side; sequence ETHKGIILRKRAKKRNIALKKFSREAQKEFLKTTVTITILRPLKMLVVE. Residues 317–337 traverse the membrane as a helical segment; that stretch reads PIVFVFSVYVAFIFAILFGFF. The Extracellular portion of the chain corresponds to 338–355; the sequence is EAYAVIYRGVYHMSMGIS. Residues 356-376 traverse the membrane as a helical segment; sequence GLPFIGIGVGLWIGAFFYLYI. The Cytoplasmic portion of the chain corresponds to 377–423; it reads DRKYLFPKPPAGTQPLTEKERTSKRTTPYRGARDAETGELLPVVPEK. The interval 387–408 is disordered; sequence AGTQPLTEKERTSKRTTPYRGA. The chain crosses the membrane as a helical span at residues 424–444; that stretch reads FLIACKFGSVALPIGLFWQAW. Topologically, residues 445-456 are extracellular; that stretch reads TARSDVHWMAPV. The chain crosses the membrane as a helical span at residues 457–477; that stretch reads AAGVPFGFGLILIFFSVLMYF. Residues 478–486 are Cytoplasmic-facing; the sequence is STCYPPLTV. Residues 487 to 509 form a helical membrane-spanning segment; the sequence is ASCLAANNLLRYVMSSVFPLFTI. Residues 510 to 518 lie on the Extracellular side of the membrane; that stretch reads QMYTKMKIK. Residues 519–539 traverse the membrane as a helical segment; sequence WASTLFALVCVVMIPIPWVFE. Over 540-659 the chain is Cytoplasmic; the sequence is KWGSKLRHKS…MATDASARMV (120 aa). Residues 587–602 are compositionally biased toward basic and acidic residues; sequence METDPSTREKPGERLS. The segment at 587-631 is disordered; the sequence is METDPSTREKPGERLSLRRTHTQPVPASFDREDGQHAQNRNEPIS. Phosphothreonine occurs at positions 589, 606, and 608. Residues 622–631 show a composition bias toward polar residues; it reads HAQNRNEPIS. S633 and S646 each carry phosphoserine.

The protein belongs to the major facilitator superfamily. DHA1 family. Polyamines/proton antiporter (TC 2.A.1.2.16) subfamily.

The protein resides in the cell membrane. Cell membrane polyamine/proton antiporter, involved in the detoxification of excess polyamines in the cytoplasm. Recognizes spermidine, spermine and the antimalarial drug quinidine, but not quinine, chloroquine and mefloquine. The protein is Polyamine transporter 4 (TPO4) of Saccharomyces cerevisiae (strain ATCC 204508 / S288c) (Baker's yeast).